Here is a 434-residue protein sequence, read N- to C-terminus: Trigger factor (434 aa).

The region spanning 160-245 (DDKVKMNFIG…LTEVQAANLP (86 aa)) is the PPIase FKBP-type domain.

This sequence belongs to the FKBP-type PPIase family. Tig subfamily.

The protein resides in the cytoplasm. The enzyme catalyses [protein]-peptidylproline (omega=180) = [protein]-peptidylproline (omega=0). In terms of biological role, involved in protein export. Acts as a chaperone by maintaining the newly synthesized protein in an open conformation. Functions as a peptidyl-prolyl cis-trans isomerase. The protein is Trigger factor of Shewanella frigidimarina (strain NCIMB 400).